We begin with the raw amino-acid sequence, 522 residues long: Peptide chain release factor 3 (522 aa).

The region spanning A10–S277 is the tr-type G domain. GTP-binding positions include S19 to T26, D87 to H91, and N141 to D144.

It belongs to the TRAFAC class translation factor GTPase superfamily. Classic translation factor GTPase family. PrfC subfamily.

The protein resides in the cytoplasm. Its function is as follows. Increases the formation of ribosomal termination complexes and stimulates activities of RF-1 and RF-2. It binds guanine nucleotides and has strong preference for UGA stop codons. It may interact directly with the ribosome. The stimulation of RF-1 and RF-2 is significantly reduced by GTP and GDP, but not by GMP. This is Peptide chain release factor 3 from Listeria monocytogenes serotype 4b (strain F2365).